We begin with the raw amino-acid sequence, 129 residues long: Large ribosomal subunit protein bL12 (129 aa).

The protein belongs to the bacterial ribosomal protein bL12 family. As to quaternary structure, homodimer. Part of the ribosomal stalk of the 50S ribosomal subunit. Forms a multimeric L10(L12)X complex, where L10 forms an elongated spine to which 2 to 4 L12 dimers bind in a sequential fashion. Binds GTP-bound translation factors.

Its function is as follows. Forms part of the ribosomal stalk which helps the ribosome interact with GTP-bound translation factors. Is thus essential for accurate translation. The polypeptide is Large ribosomal subunit protein bL12 (Pseudothermotoga lettingae (strain ATCC BAA-301 / DSM 14385 / NBRC 107922 / TMO) (Thermotoga lettingae)).